An 864-amino-acid chain; its full sequence is MVASARVQKLVRRYKLAIATALAILLLQGLVVWSFSGLEEDEPGEKGRQRKPRPLDPGEGSKDTDSSAGRRGSAGRRHGRWRGRAESPGVPVAKVVRAVTSRQRASRRVPPAPPPEAPGRQNLSGAAAGEALIGAAGFPQHGDTGSVEGAPQPTDNSFTPKCEIVGKDALSALARASTKHCQQEIANVVCLHQAGNLMPKSVPRHCQLAGKVSPGIQWEEVRAQQPVSGPLVRIAYMLVVHGRAVRQLKRLLKAVYHEEHFFYIHVDKRSNYLYREVVELAQHYDNVRVTPWRMVTIWGGASLLRMYLRSMKDLLETPGWTWDFFINLSATDYPTRTNEELVAFLSKNRDKNFLKSHGRDNSRFIKKQGLDRLFHECDSHMWRLGERQIPAGIVVDGGSDWFVLTRSFVEYVVYTEDPLVAQLRQFYTYTLLPAESFFHTVLENSPACESLVDNNLRVTNWNRKLGCKCQYKHIVDWCGCSPNDFKPQDFLRLQQVSRPTFFARKFESTVNQEVLEILDFHLYGSYPPGTPALKAYWENIYDMADGPSGLSDVLLTAYTAFARISLRHAATVSPLATAVCRFEPRGLPSSVHLYFYDDHFQGYLVTQAVQPSAQGPAETLEMWLMPQRLLKPLGHSDQASRLQSLEVGTEWDPKERLFRNFGGLLGPLDEPVAMQRWARGPNLTATVVWIDPTYVVATSYDITVDADTEVTQYKPPLSLPLRPGAWTVRLLQFWEPLGETRFLVLPLTFNHKLPLRKDDASWLHAGPPHNEYMEQSFQGLSGILNLPQPEAVEEAARRHTELTGPALEAWTDGELSSFWSVAGLCAIGPSSCPSLELCRLTSWSSLSPDPKSELGPVKADGRLR.

Topologically, residues 1–15 are cytoplasmic; the sequence is MVASARVQKLVRRYK. The helical; Signal-anchor for type II membrane protein transmembrane segment at 16 to 36 threads the bilayer; that stretch reads LAIATALAILLLQGLVVWSFS. At 37 to 864 the chain is on the lumenal side; that stretch reads GLEEDEPGEK…GPVKADGRLR (828 aa). Disordered stretches follow at residues 39-123 and 136-158; these read EEDE…RQNL and AGFPQHGDTGSVEGAPQPTDNSF. The span at 53-65 shows a compositional bias: basic and acidic residues; the sequence is RPLDPGEGSKDTD. The span at 73-82 shows a compositional bias: basic residues; sequence SAGRRHGRWR. Residue Asn122 is glycosylated (N-linked (GlcNAc...) asparagine). 4 disulfides stabilise this stretch: Cys162–Cys190, Cys206–Cys448, Cys467–Cys480, and Cys469–Cys478. Residues Val239, Asp267, and 296–298 contribute to the UDP-alpha-D-xylose site; that span reads TIW. Asn327 is a glycosylation site (N-linked (GlcNAc...) asparagine). 400-401 provides a ligand contact to UDP-alpha-D-xylose; that stretch reads DW. Residues Ser481 and 504-505 each bind UDP-alpha-D-xylose; that span reads RK. 2 disulfides stabilise this stretch: Cys580–Cys832 and Cys825–Cys838. A glycan (N-linked (GlcNAc...) asparagine) is linked at Asn682.

The protein belongs to the glycosyltransferase 14 family. XylT subfamily. Monomer. Mg(2+) serves as cofactor. Mn(2+) is required as a cofactor. Contains disulfide bonds.

It localises to the golgi apparatus membrane. The protein localises to the secreted. It catalyses the reaction UDP-alpha-D-xylose + L-seryl-[protein] = 3-O-(beta-D-xylosyl)-L-seryl-[protein] + UDP + H(+). It functions in the pathway glycan metabolism; chondroitin sulfate biosynthesis. Its pathway is glycan metabolism; heparan sulfate biosynthesis. Catalyzes the first step in the biosynthesis of chondroitin sulfate, heparan sulfate and dermatan sulfate proteoglycans, such as DCN. Transfers D-xylose from UDP-D-xylose to specific serine residues of the core protein. The protein is Xylosyltransferase 2 (Xylt2) of Rattus norvegicus (Rat).